We begin with the raw amino-acid sequence, 355 residues long: UDP-N-acetylglucosamine--N-acetylmuramyl-(pentapeptide) pyrophosphoryl-undecaprenol N-acetylglucosamine transferase (355 aa).

UDP-N-acetyl-alpha-D-glucosamine is bound by residues 15-17 (TGG), Asn-127, Arg-163, Ser-191, Ile-244, 263-268 (ALTVSE), and Gln-288.

The protein belongs to the glycosyltransferase 28 family. MurG subfamily.

It is found in the cell inner membrane. It carries out the reaction di-trans,octa-cis-undecaprenyl diphospho-N-acetyl-alpha-D-muramoyl-L-alanyl-D-glutamyl-meso-2,6-diaminopimeloyl-D-alanyl-D-alanine + UDP-N-acetyl-alpha-D-glucosamine = di-trans,octa-cis-undecaprenyl diphospho-[N-acetyl-alpha-D-glucosaminyl-(1-&gt;4)]-N-acetyl-alpha-D-muramoyl-L-alanyl-D-glutamyl-meso-2,6-diaminopimeloyl-D-alanyl-D-alanine + UDP + H(+). Its pathway is cell wall biogenesis; peptidoglycan biosynthesis. Functionally, cell wall formation. Catalyzes the transfer of a GlcNAc subunit on undecaprenyl-pyrophosphoryl-MurNAc-pentapeptide (lipid intermediate I) to form undecaprenyl-pyrophosphoryl-MurNAc-(pentapeptide)GlcNAc (lipid intermediate II). This Shigella flexneri serotype 5b (strain 8401) protein is UDP-N-acetylglucosamine--N-acetylmuramyl-(pentapeptide) pyrophosphoryl-undecaprenol N-acetylglucosamine transferase.